Consider the following 289-residue polypeptide: Trihelix transcription factor GT-3b (289 aa).

One can recognise a Myb-like domain in the interval 42-98; that stretch reads WSVEETKELIGIRGELDQTFMETKRNKLLWEVISNKMRDKSFPRSPEQCKCKWKNLV. A Bipartite nuclear localization signal motif is present at residues 65–81; the sequence is KRNKLLWEVISNKMRDK. The tract at residues 137–200 is disordered; that stretch reads ESEGGGGGTS…SNSSNSNNGV (64 aa). Acidic residues predominate over residues 156 to 168; the sequence is SDEEEENVNEELV. A Nuclear localization signal motif is present at residues 179 to 188; it reads PKKNIAKKRK. Residues 190-199 are compositionally biased toward low complexity; the sequence is GSNSSNSNNG. Residues 223–275 are a coiled coil; sequence EAREKERAEKEEEWRRKMEELEKERLAMERMWRDREEQRRSREEMRAEKRDSL.

Heterodimer with GT-3A. Associated with the mediator complex.

It is found in the nucleus. In terms of biological role, probable transcription factor that may play a role in the induction of CAM4 in response to pathogen and salt. The protein is Trihelix transcription factor GT-3b (GT-3B) of Arabidopsis thaliana (Mouse-ear cress).